The chain runs to 402 residues: 1-deoxy-D-xylulose 5-phosphate reductoisomerase (402 aa).

NADPH is bound by residues Thr-10, Gly-11, Ser-12, Ile-13, Asn-38, and Asn-124. Lys-125 provides a ligand contact to 1-deoxy-D-xylulose 5-phosphate. Residue Glu-126 coordinates NADPH. Asp-150 is a binding site for Mn(2+). Positions 151, 152, 186, and 209 each coordinate 1-deoxy-D-xylulose 5-phosphate. A Mn(2+)-binding site is contributed by Glu-152. Gly-215 contacts NADPH. 1-deoxy-D-xylulose 5-phosphate is bound by residues Ser-222, Asn-227, Lys-228, and Glu-231. Mn(2+) is bound at residue Glu-231.

It belongs to the DXR family. The cofactor is Mg(2+). Requires Mn(2+) as cofactor.

It carries out the reaction 2-C-methyl-D-erythritol 4-phosphate + NADP(+) = 1-deoxy-D-xylulose 5-phosphate + NADPH + H(+). Its pathway is isoprenoid biosynthesis; isopentenyl diphosphate biosynthesis via DXP pathway; isopentenyl diphosphate from 1-deoxy-D-xylulose 5-phosphate: step 1/6. Its function is as follows. Catalyzes the NADPH-dependent rearrangement and reduction of 1-deoxy-D-xylulose-5-phosphate (DXP) to 2-C-methyl-D-erythritol 4-phosphate (MEP). The polypeptide is 1-deoxy-D-xylulose 5-phosphate reductoisomerase (Vibrio vulnificus (strain YJ016)).